The following is a 238-amino-acid chain: uncharacterized protein (238 aa).

Helical transmembrane passes span 19 to 39 (IVIE…FQII), 79 to 99 (IILF…AEFI), and 141 to 161 (YVEI…LIKC).

It localises to the cell membrane. This is an uncharacterized protein from Methanocaldococcus jannaschii (strain ATCC 43067 / DSM 2661 / JAL-1 / JCM 10045 / NBRC 100440) (Methanococcus jannaschii).